Consider the following 181-residue polypeptide: uncharacterized protein (181 aa).

This is an uncharacterized protein from Sinorhizobium fredii (strain NBRC 101917 / NGR234).